A 658-amino-acid chain; its full sequence is Endoglucanase 3 (658 aa).

An N-terminal signal peptide occupies residues 1–23 (MQLKNFYPKMSVLGIATVMALTA). C24 carries the N-palmitoyl cysteine lipid modification. C24 carries the S-diacylglycerol cysteine lipid modification. The propeptide occupies 24–265 (CGDENTQALF…TDSLFIDNIY (242 aa)). The disordered stretch occupies residues 42–83 (ENQVPVSSSDMSPTSSDAVIDPTSSSAAVVDPSTLPAEGPIT). The span at 45–58 (VPVSSSDMSPTSSD) shows a compositional bias: low complexity. The CBM11 domain maps to 87 to 277 (GLGTLVDDFE…DSSEVEKDQP (191 aa)). The active-site Proton donor is E448. E597 (nucleophile) is an active-site residue.

The protein belongs to the glycosyl hydrolase 5 (cellulase A) family. Monomer. In terms of processing, may be a lipoprotein and may be glycosylated.

The protein resides in the membrane. The enzyme catalyses Endohydrolysis of (1-&gt;4)-beta-D-glucosidic linkages in cellulose, lichenin and cereal beta-D-glucans.. In terms of biological role, exhibits both endoglucanase and cellobiosidase activities. This is Endoglucanase 3 (cel-3) from Fibrobacter succinogenes (strain ATCC 19169 / S85).